Reading from the N-terminus, the 434-residue chain is tRNA modification GTPase MnmE (434 aa).

Positions 20, 79, and 119 each coordinate (6S)-5-formyl-5,6,7,8-tetrahydrofolate. In terms of domain architecture, TrmE-type G spans 219–361; that stretch reads GLRVVLAGRP…LQEKLVEIGK (143 aa). GTP contacts are provided by residues 229-234, 248-254, and 273-276; these read NAGKST, APIAGTT, and DTAG. Residues S233 and T254 each contribute to the Mg(2+) site. Residue K434 coordinates (6S)-5-formyl-5,6,7,8-tetrahydrofolate.

This sequence belongs to the TRAFAC class TrmE-Era-EngA-EngB-Septin-like GTPase superfamily. TrmE GTPase family. Homodimer. Heterotetramer of two MnmE and two MnmG subunits. K(+) is required as a cofactor.

It is found in the cytoplasm. Its function is as follows. Exhibits a very high intrinsic GTPase hydrolysis rate. Involved in the addition of a carboxymethylaminomethyl (cmnm) group at the wobble position (U34) of certain tRNAs, forming tRNA-cmnm(5)s(2)U34. In Zymomonas mobilis subsp. mobilis (strain ATCC 31821 / ZM4 / CP4), this protein is tRNA modification GTPase MnmE.